The following is a 478-amino-acid chain: MLLLELKKTNQTLETIHFIGIGGVGMSGIAEILHNLGYKVQGSDLSENYNTKRLEAYGIKIFVGHTPQNITNVSYVVVSSAINRNNPEVKEALERKIPIIRRAEMLAELMRLKCSVAVSGSHGKTTTTSLVACLFEAAGLHPTVINGGIINNRSTNAYLGSSNYLIAEADESDATFISIPSTIAIITNIDPEHLDYYKDFDTLINAFRSFITNLPFYGFAVCCIDHKIVRELVNNITERKVITYGIDSDDAHITAFNISTDITSSTFDVKISLPNVSGVTIIEKITIPTPGRHNILNSLAAISVGVELDFGIKAIKNGFNSFKGVKRRFTKVAEYNQASVIDDYAHHPEEIKATLSTAKNIANKQHGKVIAIFQPHRYSRMQHLFDDFMRCFDDADLLYITDVYAAGESHIEGISGQSLIDNIIKLKYHNQANFLAKLDDSLEVIMNKASPGDMIIMMGAGNISNFANELPQKFGNLS.

120–126 serves as a coordination point for ATP; it reads GSHGKTT.

The protein belongs to the MurCDEF family.

The protein resides in the cytoplasm. It carries out the reaction UDP-N-acetyl-alpha-D-muramate + L-alanine + ATP = UDP-N-acetyl-alpha-D-muramoyl-L-alanine + ADP + phosphate + H(+). The protein operates within cell wall biogenesis; peptidoglycan biosynthesis. Its function is as follows. Cell wall formation. The sequence is that of UDP-N-acetylmuramate--L-alanine ligase from Rickettsia bellii (strain OSU 85-389).